Here is a 270-residue protein sequence, read N- to C-terminus: Oxidoreductase claK (270 aa).

The protein belongs to the avfA family.

It functions in the pathway pigment biosynthesis. Functionally, oxidoreductase; part of the gene cluster that mediates the biosynthesis of the bianthraquinone cladofulvin, a conidial pigment not required for virulence but that plays a role in fitness and resistance to environmental stresses including UV light and low-temperature stress. The pathway begins with the synthesis of atrochrysone thioester by the polyketide synthase (PKS) claG. The atrochrysone carboxyl ACP thioesterase claF then breaks the thioester bond and releases the atrochrysone carboxylic acid from claG. This compound is decarboxylated by claH to yield emodin, which is further converted to chrysophanol hydroquinone by the reductase claC and the dehydratase claB. The cytochrome monooxygenase P450 claM then catalyzes the dimerization of nataloe-emodin to cladofulvin. The protein is Oxidoreductase claK of Passalora fulva (Tomato leaf mold).